A 73-amino-acid chain; its full sequence is Alternative prion protein (73 aa).

The chain crosses the membrane as a helical span at residues Trp32–Gly52.

As to expression, detected in brain homogenate, primary neurons, and peripheral blood mononuclear cells (at protein level).

The protein resides in the mitochondrion outer membrane. The chain is Alternative prion protein (PRNP) from Homo sapiens (Human).